The primary structure comprises 227 residues: ATP-dependent dethiobiotin synthetase BioD (227 aa).

13 to 18 (DIGKTY) is an ATP binding site. Thr17 lines the Mg(2+) pocket. Residue Lys38 is part of the active site. Position 42 (Ser42) interacts with substrate. ATP-binding positions include Asp55, 116-119 (EGSG), and 179-180 (NN). Residues Asp55 and Glu116 each coordinate Mg(2+).

The protein belongs to the dethiobiotin synthetase family. As to quaternary structure, homodimer. Requires Mg(2+) as cofactor.

The protein resides in the cytoplasm. The catalysed reaction is (7R,8S)-7,8-diammoniononanoate + CO2 + ATP = (4R,5S)-dethiobiotin + ADP + phosphate + 3 H(+). Its pathway is cofactor biosynthesis; biotin biosynthesis; biotin from 7,8-diaminononanoate: step 1/2. Functionally, catalyzes a mechanistically unusual reaction, the ATP-dependent insertion of CO2 between the N7 and N8 nitrogen atoms of 7,8-diaminopelargonic acid (DAPA, also called 7,8-diammoniononanoate) to form a ureido ring. In Clostridium botulinum (strain Alaska E43 / Type E3), this protein is ATP-dependent dethiobiotin synthetase BioD.